We begin with the raw amino-acid sequence, 426 residues long: Serine hydroxymethyltransferase (426 aa).

Residues Leu113 and 117–119 (GHL) each bind (6S)-5,6,7,8-tetrahydrofolate. Residue Lys222 is modified to N6-(pyridoxal phosphate)lysine. 363 to 365 (SAF) serves as a coordination point for (6S)-5,6,7,8-tetrahydrofolate.

This sequence belongs to the SHMT family. In terms of assembly, homodimer. It depends on pyridoxal 5'-phosphate as a cofactor.

It is found in the cytoplasm. It catalyses the reaction (6R)-5,10-methylene-5,6,7,8-tetrahydrofolate + glycine + H2O = (6S)-5,6,7,8-tetrahydrofolate + L-serine. Its pathway is one-carbon metabolism; tetrahydrofolate interconversion. It functions in the pathway amino-acid biosynthesis; glycine biosynthesis; glycine from L-serine: step 1/1. Functionally, catalyzes the reversible interconversion of serine and glycine with tetrahydrofolate (THF) serving as the one-carbon carrier. This reaction serves as the major source of one-carbon groups required for the biosynthesis of purines, thymidylate, methionine, and other important biomolecules. Also exhibits THF-independent aldolase activity toward beta-hydroxyamino acids, producing glycine and aldehydes, via a retro-aldol mechanism. This is Serine hydroxymethyltransferase from Bacteroides fragilis (strain ATCC 25285 / DSM 2151 / CCUG 4856 / JCM 11019 / LMG 10263 / NCTC 9343 / Onslow / VPI 2553 / EN-2).